Here is a 527-residue protein sequence, read N- to C-terminus: Amine oxidase [flavin-containing] A (527 aa).

The residue at position 1 (methionine 1) is an N-acetylmethionine. The Cytoplasmic segment spans residues 1 to 497; the sequence is MASQEKASMA…HSFWERNLPS (497 aa). At serine 383 the chain carries Phosphoserine. Cysteine 406 is subject to S-8alpha-FAD cysteine. The chain crosses the membrane as a helical; Anchor for type IV membrane protein span at residues 498-518; sequence VGGLLKIIGFSTSITALWIVV. Topologically, residues 519–527 are mitochondrial intermembrane; that stretch reads YKFKLLTRS. The interaction with membrane phospholipid headgroups stretch occupies residues 520–522; that stretch reads KFK.

The protein belongs to the flavin monoamine oxidase family. As to quaternary structure, monomer, homo- or heterodimer (containing two subunits of similar size). Each subunit contains a covalently bound flavin. Enzymatically active as monomer. It depends on FAD as a cofactor.

Its subcellular location is the mitochondrion outer membrane. The catalysed reaction is a secondary aliphatic amine + O2 + H2O = a primary amine + an aldehyde + H2O2. The enzyme catalyses a primary methyl amine + O2 + H2O = an aldehyde + H2O2 + NH4(+). It carries out the reaction (R)-adrenaline + O2 + H2O = (R)-3,4-dihydroxymandelaldehyde + methylamine + H2O2. It catalyses the reaction dopamine + O2 + H2O = 3,4-dihydroxyphenylacetaldehyde + H2O2 + NH4(+). The catalysed reaction is tyramine + O2 + H2O = (4-hydroxyphenyl)acetaldehyde + H2O2 + NH4(+). The enzyme catalyses (R)-noradrenaline + O2 + H2O = (R)-3,4-dihydroxymandelaldehyde + H2O2 + NH4(+). It carries out the reaction serotonin + O2 + H2O = (5-hydroxyindol-3-yl)acetaldehyde + H2O2 + NH4(+). It catalyses the reaction kynuramine + O2 + H2O = 3-(2-aminophenyl)-3-oxopropanal + H2O2 + NH4(+). The catalysed reaction is tryptamine + O2 + H2O = indole-3-acetaldehyde + H2O2 + NH4(+). The enzyme catalyses 2-phenylethylamine + O2 + H2O = 2-phenylacetaldehyde + H2O2 + NH4(+). Functionally, catalyzes the oxidative deamination of primary and some secondary amine such as neurotransmitters, with concomitant reduction of oxygen to hydrogen peroxide and has important functions in the metabolism of neuroactive and vasoactive amines in the central nervous system and peripheral tissues. Preferentially oxidizes serotonin. Also catalyzes the oxidative deamination of kynuramine to 3-(2-aminophenyl)-3-oxopropanal that can spontaneously condense to 4-hydroxyquinoline. This chain is Amine oxidase [flavin-containing] A, found in Equus caballus (Horse).